Here is a 720-residue protein sequence, read N- to C-terminus: Aminopeptidase RNPEPL1 (720 aa).

321–325 (VAMEN) is a substrate binding site. His-348 lines the Zn(2+) pocket. Glu-349 functions as the Proton acceptor in the catalytic mechanism. Residues His-352 and Glu-371 each coordinate Zn(2+). The disordered stretch occupies residues 671–708 (GLGPSAEPSTEPSTDLGGAEADTNPDSPALLLGDEAPS).

This sequence belongs to the peptidase M1 family. The cofactor is Zn(2+).

The enzyme catalyses Release of N-terminal amino acids, preferentially methionine, from peptides and arylamides.. Its function is as follows. Broad specificity aminopeptidase which preferentially hydrolyzes an N-terminal methionine, citrulline or glutamine. This is Aminopeptidase RNPEPL1 from Mus musculus (Mouse).